A 506-amino-acid polypeptide reads, in one-letter code: MDRVVAKIAKIRSQLTKLRSLFFLYFIYFLFFSFLGFLALKITKPRTTSRPHDFDLFFTSVSAITVSSMSTVDMEVFSNTQLIFLTILMFLGGEIFTSFLNLYVSYFTKFVFPHNKIRHILGSYNSDSSIEDRCDVETVTDYREGLIKIDERASKCLYSVVLSYHLVTNLVGSVLLLVYVNFVKTARDVLSSKEISPLTFSVFTTVSTFANCGFVPTNENMIIFRKNSGLIWLLIPQVLMGNTLFPCFLVLLIWGLYKITKRDEYGYILKNHNKMGYSHLLSVRLCVLLGVTVLGFLIIQLLFFCAFEWTSESLEGMSSYEKLVGSLFQVVNSRHTGETIVDLSTLSPAILVLFILMMYLPPYTLFMPLTEQKTIEKEGGDDDSENGKKVKKSGLIVSQLSFLTICIFLISITERQNLQRDPINFNVLNITLEVISAYGNVGFTTGYSCERRVDISDGGCKDASYGFAGRWSPMGKFVLIIVMFYGRFKQFTAKSGRAWILYPSSS.

The Cytoplasmic segment spans residues 1–19 (MDRVVAKIAKIRSQLTKLR). The chain crosses the membrane as a helical span at residues 20–40 (SLFFLYFIYFLFFSFLGFLAL). The Extracellular portion of the chain corresponds to 41-81 (KITKPRTTSRPHDFDLFFTSVSAITVSSMSTVDMEVFSNTQ). Residues 82–102 (LIFLTILMFLGGEIFTSFLNL) traverse the membrane as a helical segment. The Cytoplasmic portion of the chain corresponds to 103 to 159 (YVSYFTKFVFPHNKIRHILGSYNSDSSIEDRCDVETVTDYREGLIKIDERASKCLYS). Residues 160–180 (VVLSYHLVTNLVGSVLLLVYV) form a helical membrane-spanning segment. The Extracellular segment spans residues 181-232 (NFVKTARDVLSSKEISPLTFSVFTTVSTFANCGFVPTNENMIIFRKNSGLIW). A helical transmembrane segment spans residues 233–253 (LLIPQVLMGNTLFPCFLVLLI). The Cytoplasmic segment spans residues 254–286 (WGLYKITKRDEYGYILKNHNKMGYSHLLSVRLC). A helical transmembrane segment spans residues 287–307 (VLLGVTVLGFLIIQLLFFCAF). Residues 308 to 348 (EWTSESLEGMSSYEKLVGSLFQVVNSRHTGETIVDLSTLSP) are Extracellular-facing. The helical transmembrane segment at 349–369 (AILVLFILMMYLPPYTLFMPL) threads the bilayer. At 370-392 (TEQKTIEKEGGDDDSENGKKVKK) the chain is on the cytoplasmic side. The chain crosses the membrane as a helical span at residues 393–413 (SGLIVSQLSFLTICIFLISIT). The Extracellular portion of the chain corresponds to 414–465 (ERQNLQRDPINFNVLNITLEVISAYGNVGFTTGYSCERRVDISDGGCKDASY). N-linked (GlcNAc...) asparagine glycosylation is present at Asn-429. Residues 466–486 (GFAGRWSPMGKFVLIIVMFYG) form a helical membrane-spanning segment. Topologically, residues 487 to 506 (RFKQFTAKSGRAWILYPSSS) are cytoplasmic.

The protein belongs to the TrkH potassium transport family. HKT (TC 2.A.38.3) subfamily. N-glycosylated. Not essential for functional expression and membrane targeting. As to expression, highly expressed in roots. Expressed in flowers, leaves and stems. Expressed in the vascular tissues of every organs. In roots, leaves and flower peduncles, it is only expressed in the phloem tissues. Not expressed in root peripheral cells.

It localises to the cell membrane. It carries out the reaction Na(+)(in) = Na(+)(out). In terms of biological role, sodium transporter protein, which plays a central role in plant tolerance to salt. Upon prolongated exposure to high concentrations, Na(+) translocates from the roots to the transpiring leaves where it can increase to toxic level. Involved in Na(+) recirculation from shoots to roots, probably by mediating Na(+) loading into the phloem sap in shoots and unloading in roots, thereby removing large amounts of Na(+) from the shoot. Does not transport K(+) but regulates K(+) nutrient status via its ability to facilitate Na(+) homeostasis. Probably not involved in root uptake of Na(+). In Arabidopsis thaliana (Mouse-ear cress), this protein is Sodium transporter HKT1 (HKT1).